Here is a 3814-residue protein sequence, read N- to C-terminus: Hybrid PKS-NRPS synthetase pyvA (3814 aa).

The Ketosynthase family 3 (KS3) domain occupies 1–340 (MDPQQRLLLE…GSNAHVILES (340 aa)). Catalysis depends on for beta-ketoacyl synthase activity residues Cys-87, His-222, and His-261. The interval 441 to 758 (VFTGQGAQWH…PYFASLSRGV (318 aa)) is malonyl-CoA:ACP transacylase (MAT) domain. Catalysis depends on Ser-533, which acts as the For malonyltransferase activity. The segment at 835–970 (HPILGAKMPG…GLISISTATT (136 aa)) is N-terminal hotdog fold. The segment at 835-1149 (HPILGAKMPG…LRLTSLSNGR (315 aa)) is dehydratase (DH) domain. The region spanning 835-1151 (HPILGAKMPG…LTSLSNGRAA (317 aa)) is the PKS/mFAS DH domain. His-867 acts as the Proton acceptor; for dehydratase activity in catalysis. Residues 970–993 (TADGAPSRKPYRQHPQPQPGRMST) form a disordered region. The tract at residues 991–1151 (MSTASFPAQS…LTSLSNGRAA (161 aa)) is C-terminal hotdog fold. Asp-1057 serves as the catalytic Proton donor; for dehydratase activity. Residues 1520-1836 (GLLETLVWED…MGRHTGKVVL (317 aa)) form an enoyl reductase (ER) domain region. A ketoreductase (KR) domain region spans residues 1864–2036 (TYLLVGGLGG…PASSMNCGRI (173 aa)). The region spanning 2141–2220 (IDLSDRVALL…ALVEKAIGLF (80 aa)) is the Carrier 1 domain. Ser-2180 is modified (O-(pantetheine 4'-phosphoryl)serine). Positions 2228 to 2238 (QQQQQSVQSSS) are enriched in low complexity. Residues 2228 to 2270 (QQQQQSVQSSSAPSNDDQSPTFNKNLDSQDPSTSLQIPKADCS) are disordered. Residues 2239–2263 (APSNDDQSPTFNKNLDSQDPSTSLQ) are compositionally biased toward polar residues. A condensation (C) domain 7 region spans residues 2273–2718 (LPMSTFQNRL…PEVRLAGTLE (446 aa)). The interval 2738 to 3149 (PLNLPRRIVE…DGQLEFLGRI (412 aa)) is adenylation (A) domain 8. A disordered region spans residues 3257–3304 (SGKTDRRALGASQAPGTPPQHGAGPAAASTLDPAQAQAQDRADEEVGD). One can recognise a Carrier 2 domain in the interval 3304–3379 (DRTMATVTRV…QLVELVHSKV (76 aa)). An O-(pantetheine 4'-phosphoryl)serine modification is found at Ser-3339. The thioesterase (TE) domain stretch occupies residues 3428 to 3680 (MTGAESFTGI…VDLVPVNYLT (253 aa)).

It in the C-terminal section; belongs to the NRP synthetase family.

Its pathway is secondary metabolite biosynthesis. In terms of biological role, hybrid PKS-NRPS synthetase; part of the gene cluster that mediates the biosynthesis of pyranoviolin A, a pyranonigrin analog with a C-3 methoxy group. Initially, the PKS portion of pyvA synthesizes C-10 carbon chain from 5 molecules of malonyl-CoA, which is then condensed with the thiolation (T) domain-bound glycine activated by the adenylation (A) domain. The subsequent chain release by Dieckmann condensation (DKC) could be catalyzed by the TE domain present at the C-terminus of pyvA and/or the alpha/beta hydrolase pyvD, installing the tetramic acid moiety. The FAD-dependent monooxygenase pyvC next epoxidizes one of the olefins of the polyketide part, and the epoxide ring-opening induces the dihydro-gamma-pyrone ring formation. The cytochrome P450 monooxygeanse pyvB would be responsible for the 2 consecutive reactions, in which the dihydro-gamma-pyrone is oxidized to gamma-pyrone and C-7 is hydroxylated to yield pyranonigrin F. Finally, the O-methyltransferase pyvH methylates the C-3 hydroxy group to complete the biosynthesis. This is Hybrid PKS-NRPS synthetase pyvA from Aspergillus violaceofuscus (strain CBS 115571).